We begin with the raw amino-acid sequence, 376 residues long: Palmitoyltransferase PFA4 (376 aa).

At 1-11 (MPVKLKWPWLG) the chain is on the cytoplasmic side. A helical transmembrane segment spans residues 12 to 32 (IAIPSFLIASIGYCAHYFILL). Residues 33–40 (NFLSLRKQ) lie on the Lumenal side of the membrane. The helical transmembrane segment at 41–61 (LWYQFCQTMIWLSYYLAIYTP) threads the bilayer. The Cytoplasmic segment spans residues 62–122 (PGKPPTNFKP…NCVGYNNFPH (61 aa)). The 51-residue stretch at 78-128 (VYCKKCKCYKPERSHHCKTCNQCVLMMDHHCPWTMNCVGYNNFPHFIRFLF) folds into the DHHC domain. Cys108 serves as the catalytic S-palmitoyl cysteine intermediate. The chain crosses the membrane as a helical span at residues 123–143 (FIRFLFWVIVGTTSLAIFLTT). Over 144 to 163 (RIHSIWVHRSSPSYLYYKSE) the chain is Lumenal. Residues 164–184 (LIFLTILTPLNAFILLTISIL) form a helical membrane-spanning segment. At 185–376 (MIRCLFNQIF…EDFGVDVDVE (192 aa)) the chain is on the cytoplasmic side.

The protein belongs to the DHHC palmitoyltransferase family. PFA4 subfamily.

The protein localises to the endoplasmic reticulum membrane. It carries out the reaction L-cysteinyl-[protein] + hexadecanoyl-CoA = S-hexadecanoyl-L-cysteinyl-[protein] + CoA. Functionally, mediates the reversible addition of palmitate to target proteins, thereby regulating their membrane association and biological function. This chain is Palmitoyltransferase PFA4, found in Candida glabrata (strain ATCC 2001 / BCRC 20586 / JCM 3761 / NBRC 0622 / NRRL Y-65 / CBS 138) (Yeast).